A 366-amino-acid polypeptide reads, in one-letter code: UDP-N-acetylglucosamine--N-acetylmuramyl-(pentapeptide) pyrophosphoryl-undecaprenol N-acetylglucosamine transferase (366 aa).

UDP-N-acetyl-alpha-D-glucosamine-binding positions include 22-24, N134, R170, S198, I253, and Q298; that span reads TGG.

Belongs to the glycosyltransferase 28 family. MurG subfamily.

The protein resides in the cell inner membrane. It carries out the reaction di-trans,octa-cis-undecaprenyl diphospho-N-acetyl-alpha-D-muramoyl-L-alanyl-D-glutamyl-meso-2,6-diaminopimeloyl-D-alanyl-D-alanine + UDP-N-acetyl-alpha-D-glucosamine = di-trans,octa-cis-undecaprenyl diphospho-[N-acetyl-alpha-D-glucosaminyl-(1-&gt;4)]-N-acetyl-alpha-D-muramoyl-L-alanyl-D-glutamyl-meso-2,6-diaminopimeloyl-D-alanyl-D-alanine + UDP + H(+). The protein operates within cell wall biogenesis; peptidoglycan biosynthesis. Functionally, cell wall formation. Catalyzes the transfer of a GlcNAc subunit on undecaprenyl-pyrophosphoryl-MurNAc-pentapeptide (lipid intermediate I) to form undecaprenyl-pyrophosphoryl-MurNAc-(pentapeptide)GlcNAc (lipid intermediate II). This chain is UDP-N-acetylglucosamine--N-acetylmuramyl-(pentapeptide) pyrophosphoryl-undecaprenol N-acetylglucosamine transferase, found in Xylella fastidiosa (strain M12).